The sequence spans 71 residues: Large ribosomal subunit protein uL30 (71 aa).

Belongs to the universal ribosomal protein uL30 family. Part of the 50S ribosomal subunit.

This Mycolicibacterium paratuberculosis (strain ATCC BAA-968 / K-10) (Mycobacterium paratuberculosis) protein is Large ribosomal subunit protein uL30.